Consider the following 306-residue polypeptide: Oxygen-dependent coproporphyrinogen-III oxidase (306 aa).

A substrate-binding site is contributed by S94. The a divalent metal cation site is built by H98 and H108. The active-site Proton donor is H108. Position 110–112 (110–112 (NVR)) interacts with substrate. Residues H147 and H177 each coordinate a divalent metal cation. The interval 242–277 (YVEFNLVYDRGTLFGLQTGGRTESILMSMPPLVRWE) is important for dimerization. 260–262 (GGR) lines the substrate pocket.

This sequence belongs to the aerobic coproporphyrinogen-III oxidase family. Homodimer. A divalent metal cation is required as a cofactor.

It is found in the cytoplasm. The enzyme catalyses coproporphyrinogen III + O2 + 2 H(+) = protoporphyrinogen IX + 2 CO2 + 2 H2O. Its pathway is porphyrin-containing compound metabolism; protoporphyrin-IX biosynthesis; protoporphyrinogen-IX from coproporphyrinogen-III (O2 route): step 1/1. Its function is as follows. Involved in the heme biosynthesis. Catalyzes the aerobic oxidative decarboxylation of propionate groups of rings A and B of coproporphyrinogen-III to yield the vinyl groups in protoporphyrinogen-IX. The protein is Oxygen-dependent coproporphyrinogen-III oxidase of Shewanella woodyi (strain ATCC 51908 / MS32).